A 604-amino-acid chain; its full sequence is Vacuolar protein sorting-associated protein 64 (604 aa).

Residues 1–89 (MVELEKRRRP…SVHQVSQQQQ (89 aa)) are disordered. The Cytoplasmic portion of the chain corresponds to 1 to 578 (MVELEKRRRP…LGVVEGKRTR (578 aa)). Over residues 22 to 34 (DQSNSQGMTKTPE) the composition is skewed to polar residues. Low complexity-rich tracts occupy residues 44–57 (RARS…SRSN) and 77–89 (SPPS…QQQQ). The FHA domain occupies 185–257 (LKLGRPVTNS…NGTFVNGVKI (73 aa)). A coiled-coil region spans residues 404–563 (NLINMIKTLT…EEKKDTEDTL (160 aa)). A disordered region spans residues 539–561 (INNDNNAKVKQNDSREEKKDTED). Over residues 548–560 (KQNDSREEKKDTE) the composition is skewed to basic and acidic residues. A helical; Anchor for type IV membrane protein transmembrane segment spans residues 579-598 (VSKGMLFGVVAISFGLVATA). Over 599 to 604 (VKQLPQ) the chain is Lumenal.

Component of a complex at least composed of FAR3, FAR7, FAR8, FAR10, FAR11 and VPS64.

It localises to the endoplasmic reticulum membrane. Participates in the control of the reentry into the cell cycle following pheromone treatment. Involved in vacuolar protein sorting. The chain is Vacuolar protein sorting-associated protein 64 (VPS64) from Saccharomyces cerevisiae (strain ATCC 204508 / S288c) (Baker's yeast).